The following is a 125-amino-acid chain: MGVMWGLISVAIASLAQLSLGFAMMRLPSIAHPLAFISGLGAFNAATLALFAGLAGYLVSVFCWQKTLHTLALSKAYALLSLSYVLVWVASMLLPGLQGAFSLKAMLGVLCIMAGVMLIFLPARS.

At 1-2 the chain is on the cytoplasmic side; sequence MG. The chain crosses the membrane as a helical span at residues 3–23; that stretch reads VMWGLISVAIASLAQLSLGFA. The Periplasmic segment spans residues 24–33; it reads MMRLPSIAHP. Residues 34–54 form a helical membrane-spanning segment; sequence LAFISGLGAFNAATLALFAGL. Topologically, residues 55-76 are cytoplasmic; sequence AGYLVSVFCWQKTLHTLALSKA. The helical transmembrane segment at 77-97 threads the bilayer; sequence YALLSLSYVLVWVASMLLPGL. At 98–100 the chain is on the periplasmic side; that stretch reads QGA. The helical transmembrane segment at 101–121 threads the bilayer; sequence FSLKAMLGVLCIMAGVMLIFL. Residues 122 to 125 lie on the Cytoplasmic side of the membrane; that stretch reads PARS.

It belongs to the ArnF family. In terms of assembly, heterodimer of ArnE and ArnF.

The protein localises to the cell inner membrane. Its pathway is bacterial outer membrane biogenesis; lipopolysaccharide biosynthesis. Translocates 4-amino-4-deoxy-L-arabinose-phosphoundecaprenol (alpha-L-Ara4N-phosphoundecaprenol) from the cytoplasmic to the periplasmic side of the inner membrane. The chain is Probable 4-amino-4-deoxy-L-arabinose-phosphoundecaprenol flippase subunit ArnF from Salmonella choleraesuis (strain SC-B67).